We begin with the raw amino-acid sequence, 76 residues long: cAMP-dependent protein kinase inhibitor alpha (76 aa).

Position 2 is a blocked amino end (Thr) (Thr-2). The disordered stretch occupies residues 49 to 76 (KAEGEGDAQRNPSEQTGEAQGEAAKQES).

Belongs to the PKI family.

In terms of biological role, extremely potent competitive inhibitor of cAMP-dependent protein kinase activity, this protein interacts with the catalytic subunit of the enzyme after the cAMP-induced dissociation of its regulatory chains. In Gallus gallus (Chicken), this protein is cAMP-dependent protein kinase inhibitor alpha (PKIA).